The chain runs to 495 residues: Cysteine--tRNA ligase (495 aa).

Residue C29 participates in Zn(2+) binding. Residues 31 to 41 (VTVYDDSHVGH) carry the 'HIGH' region motif. Positions 209, 234, and 238 each coordinate Zn(2+). A 'KMSKS' region motif is present at residues 266–270 (KMSKS). K269 is a binding site for ATP.

The protein belongs to the class-I aminoacyl-tRNA synthetase family. In terms of assembly, monomer. Zn(2+) serves as cofactor.

It localises to the cytoplasm. It catalyses the reaction tRNA(Cys) + L-cysteine + ATP = L-cysteinyl-tRNA(Cys) + AMP + diphosphate. This chain is Cysteine--tRNA ligase (cysS), found in Aquifex aeolicus (strain VF5).